We begin with the raw amino-acid sequence, 148 residues long: Snaclec B4 (148 aa).

An N-terminal signal peptide occupies residues 1 to 24 (MGRIIFVSFGLLVVFLSLSGTGAA). Disulfide bonds link Cys27-Cys38, Cys55-Cys144, and Cys121-Cys136. A C-type lectin domain is found at 34–145 (YDQHCYKVFD…CRLLGHFVCK (112 aa)).

The protein belongs to the snaclec family. As to quaternary structure, heterodimer; disulfide-linked. In terms of tissue distribution, expressed by the venom gland.

The protein resides in the secreted. In terms of biological role, interferes with one step of hemostasis (modulation of platelet aggregation, or coagulation cascade, for example). The chain is Snaclec B4 from Macrovipera lebetinus (Levantine viper).